We begin with the raw amino-acid sequence, 195 residues long: Putative L(+)-tartrate dehydratase subunit beta (195 aa).

The active site involves H36. K104 lines the substrate pocket.

This sequence belongs to the class-I fumarase family. Heterotetramer of two alpha and two beta subunits.

It carries out the reaction (2R,3R)-tartrate = oxaloacetate + H2O. This is Putative L(+)-tartrate dehydratase subunit beta from Methanocaldococcus jannaschii (strain ATCC 43067 / DSM 2661 / JAL-1 / JCM 10045 / NBRC 100440) (Methanococcus jannaschii).